Here is a 279-residue protein sequence, read N- to C-terminus: Biotin synthase (279 aa).

The region spanning 2-228 (KTIMLCAISS…NARIMIAGGR (227 aa)) is the Radical SAM core domain. [4Fe-4S] cluster contacts are provided by Cys17, Cys21, and Cys24. [2Fe-2S] cluster-binding residues include Cys61, Cys96, Cys154, and Arg221.

Belongs to the radical SAM superfamily. Biotin synthase family. As to quaternary structure, homodimer. Requires [4Fe-4S] cluster as cofactor. [2Fe-2S] cluster is required as a cofactor.

It catalyses the reaction (4R,5S)-dethiobiotin + (sulfur carrier)-SH + 2 reduced [2Fe-2S]-[ferredoxin] + 2 S-adenosyl-L-methionine = (sulfur carrier)-H + biotin + 2 5'-deoxyadenosine + 2 L-methionine + 2 oxidized [2Fe-2S]-[ferredoxin]. It participates in cofactor biosynthesis; biotin biosynthesis; biotin from 7,8-diaminononanoate: step 2/2. In terms of biological role, catalyzes the conversion of dethiobiotin (DTB) to biotin by the insertion of a sulfur atom into dethiobiotin via a radical-based mechanism. This is Biotin synthase from Campylobacter curvus (strain 525.92).